The chain runs to 106 residues: Cytochrome c oxidase assembly factor 3 homolog, mitochondrial (106 aa).

The interval Met-1–Glu-28 is disordered. At Ala-2 the chain carries N-acetylalanine. The Mitochondrial matrix segment spans residues Ala-2–Asn-57. The chain crosses the membrane as a helical span at residues Ile-58–Ser-80. Residues Ser-78 to Ser-104 adopt a coiled-coil conformation. The Mitochondrial intermembrane segment spans residues Gln-81–Ser-106.

It belongs to the COA3 family. In terms of assembly, along with COX14, core component of the MITRAC (mitochondrial translation regulation assembly intermediate of cytochrome c oxidase complex) complex. Interacts with MT-CO1/COX1, SMIM20, SURF1 and TIMM21.

It is found in the mitochondrion inner membrane. Its function is as follows. Core component of the MITRAC (mitochondrial translation regulation assembly intermediate of cytochrome c oxidase complex) complex, that regulates cytochrome c oxidase assembly. MITRAC complexes regulate both translation of mitochondrial encoded components and assembly of nuclear-encoded components imported in mitochondrion. Required for efficient translation of MT-CO1 and mitochondrial respiratory chain complex IV assembly. In Pongo abelii (Sumatran orangutan), this protein is Cytochrome c oxidase assembly factor 3 homolog, mitochondrial (COA3).